A 203-amino-acid polypeptide reads, in one-letter code: METTVLGVQPRIIKKNDAEKIRKSGNVPAVVYHKGEETVAVSVNELELNKLVHTAESHIIDLRFPDGKVKRSFIKAVQFHPVTDRIIHTDFQLFAADEVIEMDVPVSVTGESVGVDKGGKLQILRHNLTLKGKPTDMPDHLVIDITDMEIGSIVHVKDIPAQSYENLEIMIDPETPVVSVVAPKVEVETEEAPEAAAAPEAEA.

Belongs to the bacterial ribosomal protein bL25 family. CTC subfamily. As to quaternary structure, part of the 50S ribosomal subunit; part of the 5S rRNA/L5/L18/L25 subcomplex. Contacts the 5S rRNA. Binds to the 5S rRNA independently of L5 and L18.

In terms of biological role, this is one of the proteins that binds to the 5S RNA in the ribosome where it forms part of the central protuberance. The chain is Large ribosomal subunit protein bL25 from Chlorobium phaeovibrioides (strain DSM 265 / 1930) (Prosthecochloris vibrioformis (strain DSM 265)).